Consider the following 338-residue polypeptide: Increasing suppression factor 1 (338 aa).

Residues 50-70 (ENSSKSNNSHHSSSTNAGNTS) show a composition bias toward low complexity. The disordered stretch occupies residues 50–72 (ENSSKSNNSHHSSSTNAGNTSRH). Ser119 is subject to Phosphoserine. Low complexity predominate over residues 267–306 (SLLSNGSSSSPLQTRNNSYSNSLVKSPSNSSLNTSVASSN). Residues 267-322 (SLLSNGSSSSPLQTRNNSYSNSLVKSPSNSSLNTSVASSNEESSPHTSNCLEERNP) are disordered. Residues 307 to 316 (EESSPHTSNC) are compositionally biased toward polar residues.

The protein belongs to the ISF1/MBR1 family.

Could influence the NAM7/UPF1 function, possibly at the level of mRNA turnover. Participates in mitochondrial biogenesis. The protein is Increasing suppression factor 1 (ISF1) of Saccharomyces cerevisiae (strain JAY291) (Baker's yeast).